A 298-amino-acid chain; its full sequence is Junctional adhesion molecule B (298 aa).

Positions 1-28 (MARSPQGLLMLLLLHYLIVALDYHKANG) are cleaved as a signal peptide. Residues 29 to 236 (FSASKDHRQE…GKRMQVDVLN (208 aa)) lie on the Extracellular side of the membrane. The 97-residue stretch at 32 to 128 (SKDHRQEVTV…GQNLQEDKVM (97 aa)) folds into the Ig-like V-type domain. Intrachain disulfides connect C51/C110 and C156/C214. N99 carries N-linked (GlcNAc...) asparagine glycosylation. An Ig-like C2-type domain is found at 135–238 (PAVPACEVPT…RMQVDVLNIS (104 aa)). Residues 237–257 (ISGIIATVVVVAFVISVCGLG) form a helical membrane-spanning segment. At 258–298 (TCYAQRKGYFSKETSFQKGSPASKVTTMSENDFKHTKSFII) the chain is on the cytoplasmic side.

It belongs to the immunoglobulin superfamily. In terms of processing, the expression in Sertoli cells is regulated by TGFB3 through ubiquitin-mediated proteasomal degradation. In terms of tissue distribution, expressed by bone marrow stromal cells (at protein level). Expressed in skin (at protein level). Expressed in testis by Sertoli cells (at protein level). Expressed by dorsal root ganglion and spinal cord neurons.

The protein resides in the cell membrane. It localises to the cell junction. Its subcellular location is the tight junction. In terms of biological role, junctional adhesion protein that mediates heterotypic cell-cell interactions with its cognate receptor JAM3 to regulate different cellular processes. Plays a role in homing and mobilization of hematopoietic stem and progenitor cells within the bone marrow. At the surface of bone marrow stromal cells, it contributes to the retention of the hematopoietic stem and progenitor cells expressing JAM3. Plays a central role in leukocytes extravasation by facilitating not only transmigration but also tethering and rolling of leukocytes along the endothelium. Tethering and rolling of leukocytes are dependent on the binding by JAM2 of the integrin alpha-4/beta-1. Plays a role in spermatogenesis where JAM2 and JAM3, which are respectively expressed by Sertoli and germ cells, mediate an interaction between both cell types and play an essential role in the anchorage of germ cells onto Sertoli cells and the assembly of cell polarity complexes during spermatid differentiation. Also functions as an inhibitory somatodendritic cue that prevents the myelination of non-axonal parts of neurons. During myogenesis, it is involved in myocyte fusion. May also play a role in angiogenesis. The protein is Junctional adhesion molecule B of Mus musculus (Mouse).